Here is a 145-residue protein sequence, read N- to C-terminus: Putative pre-16S rRNA nuclease (145 aa).

It belongs to the YqgF nuclease family.

The protein localises to the cytoplasm. In terms of biological role, could be a nuclease involved in processing of the 5'-end of pre-16S rRNA. The protein is Putative pre-16S rRNA nuclease of Sulfurihydrogenibium sp. (strain YO3AOP1).